The following is a 161-amino-acid chain: Globin CTT-VIIB-10 (161 aa).

Residues 1 to 16 (MKFFAVLALCIVGAIA) form the signal peptide. Residues 18–161 (PLTADEASLV…NTFAIVVPRL (144 aa)) enclose the Globin domain. 2 residues coordinate heme b: histidine 76 and histidine 111.

The protein belongs to the globin family. Homodimer.

The polypeptide is Globin CTT-VIIB-10 (CTT-7B10) (Chironomus thummi thummi (Midge)).